Reading from the N-terminus, the 969-residue chain is RNA polymerase-associated protein RapA (969 aa).

Positions 164-334 (EVGRRYAPRV…FARLRLLDPD (171 aa)) constitute a Helicase ATP-binding domain. 177–184 (DEVGLGKT) is an ATP binding site. The DEAH box motif lies at 280 to 283 (DEAH). In terms of domain architecture, Helicase C-terminal spans 492–672 (RVNWLLELLK…GLEPLIEESA (181 aa)).

This sequence belongs to the SNF2/RAD54 helicase family. RapA subfamily. As to quaternary structure, interacts with the RNAP. Has a higher affinity for the core RNAP than for the holoenzyme. Its ATPase activity is stimulated by binding to RNAP.

In terms of biological role, transcription regulator that activates transcription by stimulating RNA polymerase (RNAP) recycling in case of stress conditions such as supercoiled DNA or high salt concentrations. Probably acts by releasing the RNAP, when it is trapped or immobilized on tightly supercoiled DNA. Does not activate transcription on linear DNA. Probably not involved in DNA repair. The sequence is that of RNA polymerase-associated protein RapA from Aliivibrio salmonicida (strain LFI1238) (Vibrio salmonicida (strain LFI1238)).